Reading from the N-terminus, the 212-residue chain is Ferric nitrobindin-like protein (212 aa).

Residues 1 to 11 (MTSSDQPERGS) show a composition bias toward basic and acidic residues. A disordered region spans residues 1 to 36 (MTSSDQPERGSGDAAVQAAAERAEQTRGRNVPQFDD). The GXWXGXG signature appears at 64-70 (GVWRGDG).

It belongs to the nitrobindin family.

The sequence is that of Ferric nitrobindin-like protein from Saccharopolyspora erythraea (strain ATCC 11635 / DSM 40517 / JCM 4748 / NBRC 13426 / NCIMB 8594 / NRRL 2338).